Reading from the N-terminus, the 563-residue chain is Efflux pump notK (563 aa).

The disordered stretch occupies residues 1-32 (MTKDEDSGTTDGGYSTPDIAVQEKQDQPPAPE). Helical transmembrane passes span 48–68 (IFLS…AIPG), 78–98 (DVGW…PMWG), 108–128 (LVYL…AAAP), 138–158 (ALQG…ISYV), 165–185 (AMLI…GPLL), 197–217 (WCFW…VLFF), 239–259 (LPGF…LQWG), 270–290 (VIAT…VEWI), 312–332 (LYGW…PIYF), 345–365 (VNSL…GFLI), 374–394 (YEFA…TLDI), 406–426 (VIFG…LESF), 438–458 (VMLM…QSIF), and 509–529 (VFAF…AIPF). A disordered region spans residues 538–563 (GPSNGQEEEEGKKDGPAEKKEDEVAV). The segment covering 547-563 (EGKKDGPAEKKEDEVAV) has biased composition (basic and acidic residues).

Belongs to the major facilitator superfamily. TCR/Tet family.

It localises to the cell membrane. In terms of biological role, efflux pump; part of the gene cluster that mediates the biosynthesis of notoamide, a fungal indole alkaloid that belongs to a family of natural products containing a characteristic bicyclo[2.2.2]diazaoctane core. This chain is Efflux pump notK, found in Aspergillus sp. (strain MF297-2).